A 124-amino-acid chain; its full sequence is Photoactive yellow protein (124 aa).

The 64-residue stretch at A22–G85 folds into the PAS domain. S-(4-hydroxycinnamyl)cysteine is present on C68.

The protein belongs to the photoactive yellow protein family. The 4-hydroxycinnamic acid (p-coumaric acid) chromophore is covalently bound via a thioester linkage.

Functionally, this photoactive protein is a photoreceptor with kinetics similar to that of rhodopsin. The protein is Photoactive yellow protein (pyp) of Cereibacter sphaeroides (strain ATCC 17023 / DSM 158 / JCM 6121 / CCUG 31486 / LMG 2827 / NBRC 12203 / NCIMB 8253 / ATH 2.4.1.) (Rhodobacter sphaeroides).